The following is a 95-amino-acid chain: uncharacterized protein (95 aa).

This is an uncharacterized protein from Haemophilus influenzae (strain ATCC 51907 / DSM 11121 / KW20 / Rd).